We begin with the raw amino-acid sequence, 347 residues long: UDP-3-O-acylglucosamine N-acyltransferase (347 aa).

The active-site Proton acceptor is His-242.

Belongs to the transferase hexapeptide repeat family. LpxD subfamily. As to quaternary structure, homotrimer.

The catalysed reaction is a UDP-3-O-[(3R)-3-hydroxyacyl]-alpha-D-glucosamine + a (3R)-hydroxyacyl-[ACP] = a UDP-2-N,3-O-bis[(3R)-3-hydroxyacyl]-alpha-D-glucosamine + holo-[ACP] + H(+). It functions in the pathway bacterial outer membrane biogenesis; LPS lipid A biosynthesis. Functionally, catalyzes the N-acylation of UDP-3-O-acylglucosamine using 3-hydroxyacyl-ACP as the acyl donor. Is involved in the biosynthesis of lipid A, a phosphorylated glycolipid that anchors the lipopolysaccharide to the outer membrane of the cell. The protein is UDP-3-O-acylglucosamine N-acyltransferase of Dechloromonas aromatica (strain RCB).